Reading from the N-terminus, the 98-residue chain is MGRRSFGFLYRSRDFLSKTPRERGRPSPAKLLKEFEVGDKVVIDVEPSIRRGMPHRRYQGKVGVVMGRRGEAYLVDIKLGGKTKHLIVLPVHLKKHSG.

This sequence belongs to the eukaryotic ribosomal protein eL21 family.

This chain is Large ribosomal subunit protein eL21, found in Korarchaeum cryptofilum (strain OPF8).